We begin with the raw amino-acid sequence, 283 residues long: 4-diphosphocytidyl-2-C-methyl-D-erythritol kinase (283 aa).

The active site involves lysine 13. 96-106 (PMGGGIGGGSS) provides a ligand contact to ATP. The active site involves aspartate 138.

Belongs to the GHMP kinase family. IspE subfamily.

The enzyme catalyses 4-CDP-2-C-methyl-D-erythritol + ATP = 4-CDP-2-C-methyl-D-erythritol 2-phosphate + ADP + H(+). The protein operates within isoprenoid biosynthesis; isopentenyl diphosphate biosynthesis via DXP pathway; isopentenyl diphosphate from 1-deoxy-D-xylulose 5-phosphate: step 3/6. Functionally, catalyzes the phosphorylation of the position 2 hydroxy group of 4-diphosphocytidyl-2C-methyl-D-erythritol. This is 4-diphosphocytidyl-2-C-methyl-D-erythritol kinase from Pseudomonas fluorescens (strain SBW25).